Consider the following 894-residue polypeptide: Septin and tuftelin-interacting protein 1 homolog (894 aa).

2 disordered regions span residues Tyr-71–Val-149 and Asn-187–Gly-225. Over residues Pro-73–Glu-84 the composition is skewed to basic and acidic residues. Basic residues predominate over residues Lys-97–Lys-126. Residues Val-149 to Glu-195 enclose the G-patch domain. Residues Asp-202–Asp-217 are compositionally biased toward acidic residues. Positions Lys-329–Glu-449 form a coiled coil. Residues Asn-785–Ile-821 are disordered.

Belongs to the TFP11/STIP family. Identified in the spliceosome C complex.

It localises to the cytoplasm. It is found in the nucleus. Its function is as follows. May be involved in pre-mRNA splicing. The polypeptide is Septin and tuftelin-interacting protein 1 homolog (stip-1) (Dictyostelium discoideum (Social amoeba)).